Reading from the N-terminus, the 293-residue chain is 4-diphosphocytidyl-2-C-methyl-D-erythritol kinase (293 aa).

Residue K11 is part of the active site. 96-106 (PVAAGLGGGSS) is a binding site for ATP. D138 is a catalytic residue.

Belongs to the GHMP kinase family. IspE subfamily.

It catalyses the reaction 4-CDP-2-C-methyl-D-erythritol + ATP = 4-CDP-2-C-methyl-D-erythritol 2-phosphate + ADP + H(+). It participates in isoprenoid biosynthesis; isopentenyl diphosphate biosynthesis via DXP pathway; isopentenyl diphosphate from 1-deoxy-D-xylulose 5-phosphate: step 3/6. Catalyzes the phosphorylation of the position 2 hydroxy group of 4-diphosphocytidyl-2C-methyl-D-erythritol. The polypeptide is 4-diphosphocytidyl-2-C-methyl-D-erythritol kinase (Xanthobacter autotrophicus (strain ATCC BAA-1158 / Py2)).